We begin with the raw amino-acid sequence, 91 residues long: MEKNQKINNAAYDQLNKDADRILQLIKVQMDNLTLPQCPLYEEVLDTQMFGLQKEVDFAVQLGLVDREVGKDLMLRLEKELSKLHDAFTNV.

It belongs to the UPF0358 family.

This is UPF0358 protein SSP1677 from Staphylococcus saprophyticus subsp. saprophyticus (strain ATCC 15305 / DSM 20229 / NCIMB 8711 / NCTC 7292 / S-41).